Here is a 354-residue protein sequence, read N- to C-terminus: Guanine nucleotide-binding protein G(o) subunit alpha (354 aa).

Glycine 2 is lipidated: N-myristoyl glycine. Cysteine 3 carries the S-palmitoyl cysteine lipid modification. Residues 32-354 (KDVKLLLLGA…ANNLRGCGLY (323 aa)) form the G-alpha domain. The interval 35 to 48 (KLLLLGAGESGKST) is G1 motif. The GTP site is built by glutamate 43, lysine 46, serine 47, threonine 48, serine 152, leucine 176, arginine 177, threonine 178, and arginine 179. Serine 47 lines the Mg(2+) pocket. Residues 174–182 (DILRTRVKT) form a G2 motif region. Position 182 (threonine 182) interacts with Mg(2+). The G3 motif stretch occupies residues 197 to 206 (FRLFDVGGQR). Glutamine 205 carries the 5-glutamyl histamine modification. The G4 motif stretch occupies residues 266 to 273 (ILFLNKKD). Residues asparagine 270, aspartate 273, and cysteine 325 each coordinate GTP. The segment at 324 to 329 (TCATDT) is G5 motif. Asparagine 346 carries the deamidated asparagine; in form Alpha-3 modification. The S-palmitoyl cysteine moiety is linked to residue cysteine 351.

This sequence belongs to the G-alpha family. G(i/o/t/z) subfamily. In terms of assembly, g proteins are composed of 3 units; alpha, beta and gamma. The alpha chain contains the guanine nucleotide binding site. Forms a complex with GNB1 and GNG3. Interacts with RGS14. Interacts with RGS16. Interacts with RGS19. Interacts (when palmitoylated) with ADGRG3. In terms of processing, deamidation of Asn-346 converts alpha-1 to alpha-3. Post-translationally, histaminylated at Gln-205 residues by TGM2.

It localises to the cell membrane. It is found in the membrane. It carries out the reaction GTP + H2O = GDP + phosphate + H(+). Its activity is regulated as follows. The GTPase activity is promoted by GTPAse activators, such as RGS14, RGS16 and RGS19. Its function is as follows. Guanine nucleotide-binding proteins (G proteins) function as transducers downstream of G protein-coupled receptors (GPCRs) in numerous signaling cascades. The alpha chain contains the guanine nucleotide binding site and alternates between an active, GTP-bound state and an inactive, GDP-bound state. Signaling by an activated GPCR promotes GDP release and GTP binding. The alpha subunit has a low GTPase activity that converts bound GTP to GDP, thereby terminating the signal. Both GDP release and GTP hydrolysis are modulated by numerous regulatory proteins. Signaling is mediated via effector proteins, such as adenylate cyclase. Inhibits adenylate cyclase activity, leading to decreased intracellular cAMP levels. The polypeptide is Guanine nucleotide-binding protein G(o) subunit alpha (GNAO1) (Cricetulus longicaudatus (Long-tailed dwarf hamster)).